Here is a 471-residue protein sequence, read N- to C-terminus: Putative multidrug resistance protein MdtD (471 aa).

A run of 13 helical transmembrane segments spans residues 12 to 32 (LWIVAFGFFMQSLDTTIVNTA), 49 to 69 (MIIVSYVLTVAVMLPASGWLA), 77 to 97 (IFFTAIVLFTAGSLFCAQAST), 106 to 126 (VLQGIGGAMMVPVGRLTVMKI), 138 to 158 (FVTLPGQVGPLLGPALGGVLV), 165 to 185 (WIFLINIPVGIVGAIATLCLM), 195 to 215 (FDLSGFLLLAAGMATLTLALD), 220 to 240 (LGISSRWLAGLVAVGLAALLL), 263 to 283 (FSLGLGGSFAGRIGSGMLPFM), 286 to 306 (VFLQIGLGFSPFHAGLMMIPM), 342 to 362 (LLFMFSALAGWYYALPLVLFL), 393 to 413 (LLSMVMQLSMSIGVTIAGLLL), and 431 to 451 (VFLYTYLSMAAIIALPALIFS).

Belongs to the major facilitator superfamily. TCR/Tet family.

The protein resides in the cell inner membrane. The chain is Putative multidrug resistance protein MdtD from Klebsiella pneumoniae (strain 342).